Reading from the N-terminus, the 194-residue chain is Thioredoxin peroxidase (194 aa).

Positions leucine 2–phenylalanine 160 constitute a Thioredoxin domain. Cysteine 47 acts as the Cysteine sulfenic acid (-SOH) intermediate in catalysis.

It belongs to the peroxiredoxin family. AhpC/Prx1 subfamily. In terms of assembly, homodimer; disulfide-linked, upon oxidation.

It carries out the reaction a hydroperoxide + [thioredoxin]-dithiol = an alcohol + [thioredoxin]-disulfide + H2O. In terms of biological role, antioxidant. Could be involved in protection against reactive oxygen species (ROS) generated by metabolic processes and/or protection of the parasite against ROS released by immune effector cells. Its function is as follows. Thiol-specific peroxidase that catalyzes the reduction of hydrogen peroxide and organic hydroperoxides to water and alcohols, respectively. Plays a role in cell protection against oxidative stress by detoxifying peroxides and as sensor of hydrogen peroxide-mediated signaling events. This is Thioredoxin peroxidase from Fasciola hepatica (Liver fluke).